The sequence spans 370 residues: NADH-quinone oxidoreductase subunit D (370 aa).

The protein belongs to the complex I 49 kDa subunit family. As to quaternary structure, NDH-1 is composed of 14 different subunits. Subunits NuoB, C, D, E, F, and G constitute the peripheral sector of the complex.

It localises to the cell membrane. It carries out the reaction a quinone + NADH + 5 H(+)(in) = a quinol + NAD(+) + 4 H(+)(out). Functionally, NDH-1 shuttles electrons from NADH, via FMN and iron-sulfur (Fe-S) centers, to quinones in the respiratory chain. The immediate electron acceptor for the enzyme in this species is believed to be a menaquinone. Couples the redox reaction to proton translocation (for every two electrons transferred, four hydrogen ions are translocated across the cytoplasmic membrane), and thus conserves the redox energy in a proton gradient. In Desulfitobacterium hafniense (strain Y51), this protein is NADH-quinone oxidoreductase subunit D.